The chain runs to 358 residues: uncharacterized protein (358 aa).

Residues 229-264 enclose the EF-hand domain; sequence KQLHEFKLAFDYFDQEKNGWLDYEHFELCLKSQGYN. Ca(2+) is bound by residues aspartate 242, asparagine 246, tryptophan 248, and histidine 253.

This is an uncharacterized protein from Caenorhabditis elegans.